A 239-amino-acid chain; its full sequence is Octanoyl-[acyl-carrier-protein]:protein N-octanoyltransferase LIPT2, mitochondrial (239 aa).

A mitochondrion-targeting transit peptide spans 1–18 (MSVPVLRVRRLGLVGYAE). Positions 37–217 (GSPGGALLLC…AFEEEFQCQL (181 aa)) constitute a BPL/LPL catalytic domain. Substrate is bound by residues 81-88 (RGGLITFH), 147-149 (AIG), and 160-162 (GLA). Cysteine 178 serves as the catalytic Acyl-thioester intermediate. Residues 220–239 (EQNPEQNPVQNRPDRDAGPL) are disordered.

Belongs to the LipB family.

The protein resides in the mitochondrion. It carries out the reaction octanoyl-[ACP] + L-lysyl-[protein] = N(6)-octanoyl-L-lysyl-[protein] + holo-[ACP] + H(+). It participates in protein modification; protein lipoylation via endogenous pathway; protein N(6)-(lipoyl)lysine from octanoyl-[acyl-carrier-protein]: step 1/2. Its function is as follows. Catalyzes the transfer of endogenously produced octanoic acid from octanoyl-acyl-carrier-protein (octanoyl-ACP) onto the lipoyl domains of lipoate-dependent enzymes such as the protein H of the glycine cleavage system (GCSH). Lipoyl-ACP can also act as a substrate although octanoyl-ACP is likely to be the physiological substrate. The chain is Octanoyl-[acyl-carrier-protein]:protein N-octanoyltransferase LIPT2, mitochondrial (lipt2) from Xenopus tropicalis (Western clawed frog).